We begin with the raw amino-acid sequence, 83 residues long: MAFGAGAGGGRRPFFRRRKTCPFSGANAPKIDYKDVKLLSRYVSERGKIVPSRITAVSAKKQRELAQAIKRARFLGLLPYVIK.

The protein belongs to the bacterial ribosomal protein bS18 family. Part of the 30S ribosomal subunit. Forms a tight heterodimer with protein bS6.

Binds as a heterodimer with protein bS6 to the central domain of the 16S rRNA, where it helps stabilize the platform of the 30S subunit. In Methylobacterium radiotolerans (strain ATCC 27329 / DSM 1819 / JCM 2831 / NBRC 15690 / NCIMB 10815 / 0-1), this protein is Small ribosomal subunit protein bS18.